A 434-amino-acid polypeptide reads, in one-letter code: Gamma-enolase (434 aa).

S2 is modified (N-acetylserine). An N6-acetyllysine modification is found at K5. Position 26 is a phosphothreonine (T26). S40 contacts Mg(2+). Position 44 is a phosphotyrosine (Y44). K60 carries the N6-acetyllysine; alternate modification. K60 is subject to N6-succinyllysine; alternate. K64 is modified (N6-acetyllysine). N6-acetyllysine; alternate is present on K89. K89 bears the N6-succinyllysine; alternate mark. Substrate is bound by residues H158 and E167. N6-acetyllysine occurs at positions 193, 197, and 199. The residue at position 202 (K202) is an N6-acetyllysine; alternate. K202 participates in a covalent cross-link: Glycyl lysine isopeptide (Lys-Gly) (interchain with G-Cter in SUMO2); alternate. E210 serves as the catalytic Proton donor. Residues K228 and K233 each carry the N6-acetyllysine; alternate modification. K228 bears the N6-succinyllysine; alternate mark. Position 233 is an N6-(2-hydroxyisobutyryl)lysine; alternate (K233). D245 is a Mg(2+) binding site. At K256 the chain carries N6-acetyllysine. Residue S263 is modified to Phosphoserine. At Y287 the chain carries Phosphotyrosine. A Phosphoserine modification is found at S291. The Mg(2+) site is built by E293 and D318. Residues E293 and D318 each contribute to the substrate site. N6-acetyllysine occurs at positions 335 and 343. K343 functions as the Proton acceptor in the catalytic mechanism. Residues 370–373 (SHRS) and K394 contribute to the substrate site. N6-acetyllysine is present on K406.

The protein belongs to the enolase family. In terms of assembly, mammalian enolase is composed of 3 isozyme subunits, alpha, beta and gamma, which can form homodimers or heterodimers which are cell-type and development-specific. It depends on Mg(2+) as a cofactor. Skeletal muscle (at protein level). The alpha/alpha homodimer is expressed in embryo and in most adult tissues. The alpha/beta heterodimer and the beta/beta homodimer are found in striated muscle, and the alpha/gamma heterodimer and the gamma/gamma homodimer in neurons.

The protein resides in the cytoplasm. The protein localises to the cell membrane. The enzyme catalyses (2R)-2-phosphoglycerate = phosphoenolpyruvate + H2O. The protein operates within carbohydrate degradation; glycolysis; pyruvate from D-glyceraldehyde 3-phosphate: step 4/5. Functionally, has neurotrophic and neuroprotective properties on a broad spectrum of central nervous system (CNS) neurons. Binds, in a calcium-dependent manner, to cultured neocortical neurons and promotes cell survival. This Mus musculus (Mouse) protein is Gamma-enolase (Eno2).